Consider the following 372-residue polypeptide: Probable inactive receptor-like protein kinase At1g65250 (372 aa).

Residues 1–4 (MGWL) and lysine 38 contribute to the ATP site. Residues 1–314 (MGWLRKKKKP…QERCQMKAFL (314 aa)) enclose the Protein kinase domain. Residues tyrosine 128 and tyrosine 221 each carry the phosphotyrosine modification. The disordered stretch occupies residues 348–372 (SSSLSSGQTQLDSAQDISSTVVLSN). The segment covering 354–372 (GQTQLDSAQDISSTVVLSN) has biased composition (polar residues).

It belongs to the protein kinase superfamily.

The protein is Probable inactive receptor-like protein kinase At1g65250 of Arabidopsis thaliana (Mouse-ear cress).